The primary structure comprises 352 residues: MNILGIETSCDETSAAVLKNGLVASNIISSQLCHSEFGGVVPELASREHDRMVVTVVEAALNAANIKKTELDFIAATAGPGLIGAVLVGLSFGQALGFSLGKPFIPINHIDAHIFSSFINDGTQHTFPAFPFVSLTVSGGHTMLCLVHDDLRIEPLGSTIDDAAGEAFDKTGKMLGLNYPAGPVIDKLAQTGDPNFHQFPQALTAQSKTGNDYKANLDFSFSGLKTSVLRYLSGQKPEFIQAHLNDICASIQEAITSVLVRKTILAAEQSGVRTISVTGGVSANSELRRKFEAASKAHGFSLHIPKPVYSTDNAAMIATLAHLKAERGLIEPCAYNAPAFAGYEKMKVFRAR.

His-109 and His-113 together coordinate Fe cation. Substrate contacts are provided by residues 136 to 140 (TVSGG), Asp-169, Gly-182, Asp-186, and Asn-284. Asp-312 is a Fe cation binding site.

Belongs to the KAE1 / TsaD family. It depends on Fe(2+) as a cofactor.

The protein resides in the cytoplasm. The catalysed reaction is L-threonylcarbamoyladenylate + adenosine(37) in tRNA = N(6)-L-threonylcarbamoyladenosine(37) in tRNA + AMP + H(+). In terms of biological role, required for the formation of a threonylcarbamoyl group on adenosine at position 37 (t(6)A37) in tRNAs that read codons beginning with adenine. Is involved in the transfer of the threonylcarbamoyl moiety of threonylcarbamoyl-AMP (TC-AMP) to the N6 group of A37, together with TsaE and TsaB. TsaD likely plays a direct catalytic role in this reaction. The chain is tRNA N6-adenosine threonylcarbamoyltransferase from Chloroherpeton thalassium (strain ATCC 35110 / GB-78).